A 196-amino-acid polypeptide reads, in one-letter code: MDVTIQHPWFKRALGPFYPSRLFDQFFGEGLFEYDLLPFLSSTISPYYRQSLFRTVLDSGISELMTHMWFVMHQPHAGNPKNNPGKVRSDRDKFVIFLDVKHFSPEDLTVKVLEDFVEIHGKHNERQDDHGYISREFHRRYRLPSNVDQSALSCSLSADGMLTFSGPKVQSGLDAGHSERAIPVSREEKPSSAPSS.

The residue at position 1 (Met-1) is an N-acetylmethionine. Residues Met-1–Glu-63 are required for complex formation with BFSP1 and BFSP2. Gln-6 is modified (deamidated glutamine; partial). Ser-45 is subject to Phosphoserine. Position 50 is a deamidated glutamine; partial (Gln-50). The sHSP domain maps to His-76 to Ser-185. N6-acetyllysine occurs at positions 93 and 122. Position 123 (His-123) interacts with Zn(2+). Asn-124 is modified (deamidated asparagine; partial). Positions 125 and 130 each coordinate Zn(2+). Ser-145 bears the Phosphoserine mark. Residue Asn-146 is modified to Deamidated asparagine; partial. A disordered region spans residues Lys-168–Ser-196. Gln-170 is subject to Deamidated glutamine; partial. The segment covering Gly-176–Pro-190 has biased composition (basic and acidic residues). His-177 is a binding site for Zn(2+). The O-linked (GlcNAc) serine glycan is linked to Ser-185.

It belongs to the small heat shock protein (HSP20) family. Heteropolymer composed of three CRYAA and one CRYAB subunits. Inter-subunit bridging via zinc ions enhances stability, which is crucial as there is no protein turn over in the lens. Can also form homodimers and homotetramers (dimers of dimers) which serve as the building blocks of homooligomers. Within homooligomers, the zinc-binding motif is created from residues of 3 different molecules. His-123 and Glu-125 from one molecule are ligands of the zinc ion, and His-130 and His-177 residues from additional molecules complete the site with tetrahedral coordination geometry. Part of a complex required for lens intermediate filament formation composed of BFSP1, BFSP2 and CRYAA. Acetylation at Lys-93 may increase chaperone activity. Post-translationally, undergoes age-dependent proteolytical cleavage at the C-terminus. Cleavage by m-calpain produces specifically alpha-crystallin A(1-162), cleavage by Capn3/Lp82 produces specifically alpha-crystallin A(1-168) which is the major truncated form during normal maturation and induced cataract formation. As to expression, highly expressed in eye lens. Also expressed in non-lenticular tissues such as brain, spleen, liver, lung, skin, small intestine and a several epithelial and fibroblast cell lines with highest levels in spleen.

The protein localises to the cytoplasm. Its subcellular location is the nucleus. In terms of biological role, contributes to the transparency and refractive index of the lens. Acts as a chaperone, preventing aggregation of various proteins under a wide range of stress conditions. Required for the correct formation of lens intermediate filaments as part of a complex composed of BFSP1, BFSP2 and CRYAA. Inhibits bacterial growth in the lens. The sequence is that of Alpha-crystallin A chain (Cryaa) from Rattus norvegicus (Rat).